A 493-amino-acid chain; its full sequence is Acetylcholine receptor subunit beta (493 aa).

The signal sequence occupies residues 1-24 (MENVRRMALGLVVMMALALSGVGA). Residues 25 to 240 (SVMEDTLLSV…VTFYLIIQRK (216 aa)) are Extracellular-facing. Residues C152 and C166 are joined by a disulfide bond. N165 carries an N-linked (GlcNAc...) asparagine glycan. 3 helical membrane-spanning segments follow: residues 241-265 (PLFY…VFYL), 273-291 (MSLS…LLLA), and 307-328 (YLMF…VLNL). The Cytoplasmic segment spans residues 329–461 (HHRSPNTHTM…WQYVAMVADR (133 aa)). Y379 carries the post-translational modification Phosphotyrosine; by Tyr-kinases. A helical membrane pass occupies residues 462–480 (LFLYVFFVICSIGTFSIFL).

This sequence belongs to the ligand-gated ion channel (TC 1.A.9) family. Acetylcholine receptor (TC 1.A.9.1) subfamily. Beta-1/CHRNB1 sub-subfamily. In terms of assembly, pentamer of two alpha chains, and one each of the beta, delta, and gamma chains.

The protein localises to the postsynaptic cell membrane. It is found in the cell membrane. It catalyses the reaction K(+)(in) = K(+)(out). The catalysed reaction is Na(+)(in) = Na(+)(out). Functionally, after binding acetylcholine, the AChR responds by an extensive change in conformation that affects all subunits and leads to opening of an ion-conducting channel across the plasma membrane. The chain is Acetylcholine receptor subunit beta (CHRNB1) from Tetronarce californica (Pacific electric ray).